The primary structure comprises 183 residues: Small ribosomal subunit protein eS10z (183 aa).

The tract at residues 91–183 is disordered; that stretch reads LKKSARPPGR…GAGPTSSSME (93 aa). A compositionally biased stretch (basic and acidic residues) spans 109–130; sequence DRPRGPPRFEGDRPRFGDRDGY. 2 stretches are compositionally biased toward gly residues: residues 131–146 and 161–175; these read RGGP…GEKG and GRPG…GFGA.

The protein belongs to the eukaryotic ribosomal protein eS10 family.

The protein localises to the cytoplasm. This is Small ribosomal subunit protein eS10z from Oryza sativa subsp. japonica (Rice).